We begin with the raw amino-acid sequence, 298 residues long: Porphobilinogen deaminase (298 aa).

The residue at position 239 (Cys-239) is an S-(dipyrrolylmethanemethyl)cysteine.

Belongs to the HMBS family. Monomer. Dipyrromethane is required as a cofactor.

The enzyme catalyses 4 porphobilinogen + H2O = hydroxymethylbilane + 4 NH4(+). It functions in the pathway porphyrin-containing compound metabolism; protoporphyrin-IX biosynthesis; coproporphyrinogen-III from 5-aminolevulinate: step 2/4. Tetrapolymerization of the monopyrrole PBG into the hydroxymethylbilane pre-uroporphyrinogen in several discrete steps. In Ehrlichia canis (strain Jake), this protein is Porphobilinogen deaminase.